A 274-amino-acid chain; its full sequence is uncharacterized protein (274 aa).

This sequence belongs to the class IV-like SAM-binding methyltransferase superfamily. RNA methyltransferase TrmH family.

This is an uncharacterized protein from Synechocystis sp. (strain ATCC 27184 / PCC 6803 / Kazusa).